The chain runs to 470 residues: MTVRTRFAPSPTGFLHVGGVRTALFSWLYAKHHNGQFILRIEDTDRERSTQESVQAILDGMAWLGLNFDEGPYYQTERYARYQQVAQQLLEEGKAYRCQCSKERLEALREAQLAAKEKPRYDGHCRNQSLPDSGIPYVIRFRNPDGGIVSFHDEVYGDIHVDNSELDDLILVRSDGHPTYNFAVVIDDWDMKITHVIRGDDHINNTPRQINLFKALDAPVPVFAHLPMILGEDGKRLSKRHGAVSVLQFKELGVLPHALLNYLVRLGWSHGDQEIFSVQEMITSFDLKNVSRGVSSFNYDKLYWLNQHYQKSDSPESVANALQWHFEQAGIDLNQGPDLKDLVAVQAERCKSLAEMCQISQYFYTDTIEYNEDAVKKHLRPVVLEPLMVLHERLKALDEWKNDKIQECINDVSLQFDLNLGKIAQPLRVAVTGSGTSPSIDMTLALLGKNKSIKRLEDALEKIRARASVV.

A 'HIGH' region motif is present at residues 9–19 (PSPTGFLHVGG). Residues 236 to 240 (RLSKR) carry the 'KMSKS' region motif. Lys239 contacts ATP.

This sequence belongs to the class-I aminoacyl-tRNA synthetase family. Glutamate--tRNA ligase type 1 subfamily. In terms of assembly, monomer.

Its subcellular location is the cytoplasm. It catalyses the reaction tRNA(Glu) + L-glutamate + ATP = L-glutamyl-tRNA(Glu) + AMP + diphosphate. Catalyzes the attachment of glutamate to tRNA(Glu) in a two-step reaction: glutamate is first activated by ATP to form Glu-AMP and then transferred to the acceptor end of tRNA(Glu). This chain is Glutamate--tRNA ligase, found in Legionella pneumophila (strain Lens).